The primary structure comprises 698 residues: Elongation factor G (698 aa).

Residues 8–290 enclose the tr-type G domain; sequence ERYRNIGIAA…AVIEFLPAPN (283 aa). Residues 17-24, 88-92, and 142-145 contribute to the GTP site; these read AHIDAGKT, DTPGH, and NKMD.

Belongs to the TRAFAC class translation factor GTPase superfamily. Classic translation factor GTPase family. EF-G/EF-2 subfamily.

It localises to the cytoplasm. Catalyzes the GTP-dependent ribosomal translocation step during translation elongation. During this step, the ribosome changes from the pre-translocational (PRE) to the post-translocational (POST) state as the newly formed A-site-bound peptidyl-tRNA and P-site-bound deacylated tRNA move to the P and E sites, respectively. Catalyzes the coordinated movement of the two tRNA molecules, the mRNA and conformational changes in the ribosome. The chain is Elongation factor G from Halorhodospira halophila (strain DSM 244 / SL1) (Ectothiorhodospira halophila (strain DSM 244 / SL1)).